The following is a 244-amino-acid chain: 7-cyano-7-deazaguanine synthase (244 aa).

14-24 (FSGGQDSATCV) contributes to the ATP binding site. Zn(2+) contacts are provided by Cys-202, Cys-217, Cys-220, and Cys-223.

This sequence belongs to the QueC family. Requires Zn(2+) as cofactor.

It catalyses the reaction 7-carboxy-7-deazaguanine + NH4(+) + ATP = 7-cyano-7-deazaguanine + ADP + phosphate + H2O + H(+). It participates in purine metabolism; 7-cyano-7-deazaguanine biosynthesis. Functionally, catalyzes the ATP-dependent conversion of 7-carboxy-7-deazaguanine (CDG) to 7-cyano-7-deazaguanine (preQ(0)). The polypeptide is 7-cyano-7-deazaguanine synthase (Burkholderia lata (strain ATCC 17760 / DSM 23089 / LMG 22485 / NCIMB 9086 / R18194 / 383)).